The primary structure comprises 333 residues: Cytosolic sulfotransferase 10 (333 aa).

76-81 (KSGTTW) contributes to the 3'-phosphoadenylyl sulfate binding site. Catalysis depends on histidine 146, which acts as the Proton acceptor. 3'-phosphoadenylyl sulfate is bound by residues arginine 168, serine 176, tyrosine 234, and 299 to 301 (RKG).

It belongs to the sulfotransferase 1 family. As to expression, expressed in roots.

It is found in the cytoplasm. Sulfotransferase that utilizes 3'-phospho-5'-adenylyl sulfate (PAPS) as sulfonate donor to specifically catalyze the sulfate conjugation of brassinosteroids, including castasterone (CS), brassinolide (BL), related 24-epimers, and the naturally occurring (22R, 23R)-28-homobrassinosteroids. No activity on phenolic acids, desulfo-glucosinolates, flavonoids, steroids, gibberellic acids, cytokinins, phenylpropanoids, hydroxyjasmonates and coumarins. The polypeptide is Cytosolic sulfotransferase 10 (SOT10) (Arabidopsis thaliana (Mouse-ear cress)).